We begin with the raw amino-acid sequence, 257 residues long: 3-deoxy-manno-octulosonate cytidylyltransferase (257 aa).

The protein belongs to the KdsB family.

It localises to the cytoplasm. It catalyses the reaction 3-deoxy-alpha-D-manno-oct-2-ulosonate + CTP = CMP-3-deoxy-beta-D-manno-octulosonate + diphosphate. It participates in nucleotide-sugar biosynthesis; CMP-3-deoxy-D-manno-octulosonate biosynthesis; CMP-3-deoxy-D-manno-octulosonate from 3-deoxy-D-manno-octulosonate and CTP: step 1/1. Its pathway is bacterial outer membrane biogenesis; lipopolysaccharide biosynthesis. In terms of biological role, activates KDO (a required 8-carbon sugar) for incorporation into bacterial lipopolysaccharide in Gram-negative bacteria. The sequence is that of 3-deoxy-manno-octulosonate cytidylyltransferase from Chromohalobacter salexigens (strain ATCC BAA-138 / DSM 3043 / CIP 106854 / NCIMB 13768 / 1H11).